Consider the following 454-residue polypeptide: Tubulin gamma chain (454 aa).

142–148 (AGGTGSG) contributes to the GTP binding site.

It belongs to the tubulin family.

Its subcellular location is the cytoplasm. The protein resides in the cytoskeleton. It localises to the microtubule organizing center. It is found in the spindle pole body. Functionally, tubulin is the major constituent of microtubules. The gamma chain is found at microtubule organizing centers (MTOC) such as the spindle pole or the centrosome, suggesting that it is involved in the minus-end nucleation of microtubule assembly. Interacts physically with beta-tubulin and is involved in microtubule function. The chain is Tubulin gamma chain (mipA) from Emericella nidulans (strain FGSC A4 / ATCC 38163 / CBS 112.46 / NRRL 194 / M139) (Aspergillus nidulans).